The primary structure comprises 102 residues: Small ribosomal subunit protein uS10 (102 aa).

A disordered region spans residues 30–58 (TGVNLSGPIPLPTKTLEIPTRKSPDGEGT).

Belongs to the universal ribosomal protein uS10 family. In terms of assembly, part of the 30S ribosomal subunit.

Involved in the binding of tRNA to the ribosomes. This chain is Small ribosomal subunit protein uS10, found in Haloquadratum walsbyi (strain DSM 16790 / HBSQ001).